Here is a 181-residue protein sequence, read N- to C-terminus: Cytochrome P450 monooxygenase dtpC (181 aa).

A heme-binding site is contributed by Cys-125.

The protein belongs to the cytochrome P450 family. It depends on heme as a cofactor.

It participates in alkaloid biosynthesis. Its pathway is secondary metabolite biosynthesis. Cytochrome P450 monooxygenase; part of the gene cluster that mediates the biosynthesis of the dimeric diketopiperazine alkaloid ditryptophenaline. The nonribosomal peptide synthase dtpA accepts L-tryptophan and L-phenylalanine as its substrates and forms the phenylalanyl-tryptophanyl cyclic dipeptide product cyclophenylalanyltryptophenyl. The N-methyltransferase dtpB is responsible for the N-methylation of cyclophenylalanyltryptophenyl to yield cyclo-N-methylphenylalanyltryptophenyl. The cytochrome P450 monooxygenase is responsible not only for pyrroloindole ring formation but also for concurrent dimerization of N-methylphenylalanyltryptophanyl diketopiperazine monomers into a homodimeric product. In Aspergillus flavus (strain ATCC 200026 / FGSC A1120 / IAM 13836 / NRRL 3357 / JCM 12722 / SRRC 167), this protein is Cytochrome P450 monooxygenase dtpC.